Reading from the N-terminus, the 458-residue chain is Probable Xaa-Pro aminopeptidase pepP (458 aa).

D254, D265, E388, and E428 together coordinate Mn(2+).

The protein belongs to the peptidase M24B family. Mn(2+) is required as a cofactor.

The catalysed reaction is Release of any N-terminal amino acid, including proline, that is linked to proline, even from a dipeptide or tripeptide.. In terms of biological role, catalyzes the removal of a penultimate prolyl residue from the N-termini of peptides. This chain is Probable Xaa-Pro aminopeptidase pepP (pepP), found in Botryotinia fuckeliana (strain B05.10) (Noble rot fungus).